A 460-amino-acid polypeptide reads, in one-letter code: Keratin, type I cytoskeletal 27 (460 aa).

Positions Met1–Asn83 are head. The segment at Glu84–Trp119 is coil 1A. The region spanning Glu84–Cys399 is the IF rod domain. The tract at residues Tyr120 to Val141 is linker 1. Positions Ile142–Leu233 are coil 1B. The linker 12 stretch occupies residues Gln234–Leu256. The tract at residues Leu257–Glu395 is coil 2. The segment at Asp396–Ser460 is tail. Residues Leu435–Ser460 are disordered. Over residues Lys448 to Ser460 the composition is skewed to polar residues.

The protein belongs to the intermediate filament family. Heterotetramer of two type I and two type II keratins. Interacts with KRT6A to form filaments.

It is found in the cytoplasm. Its function is as follows. Essential for the proper assembly of type I and type II keratin protein complexes and formation of keratin intermediate filaments in the inner root sheath (irs). This chain is Keratin, type I cytoskeletal 27, found in Bos taurus (Bovine).